A 513-amino-acid polypeptide reads, in one-letter code: ATP synthase subunit alpha (513 aa).

169-176 (GDRQTGKT) serves as a coordination point for ATP.

Belongs to the ATPase alpha/beta chains family. As to quaternary structure, F-type ATPases have 2 components, CF(1) - the catalytic core - and CF(0) - the membrane proton channel. CF(1) has five subunits: alpha(3), beta(3), gamma(1), delta(1), epsilon(1). CF(0) has three main subunits: a(1), b(2) and c(9-12). The alpha and beta chains form an alternating ring which encloses part of the gamma chain. CF(1) is attached to CF(0) by a central stalk formed by the gamma and epsilon chains, while a peripheral stalk is formed by the delta and b chains.

Its subcellular location is the cell inner membrane. The catalysed reaction is ATP + H2O + 4 H(+)(in) = ADP + phosphate + 5 H(+)(out). Produces ATP from ADP in the presence of a proton gradient across the membrane. The alpha chain is a regulatory subunit. The chain is ATP synthase subunit alpha from Escherichia coli O81 (strain ED1a).